A 136-amino-acid polypeptide reads, in one-letter code: MLQPKRTKFRKVMTGRNRGLAKGTEVSFGEFGLKAVGRGRLTARQIEAARRAMTRHIKRQGQIWIRVIPDKPSVQKPLEVRQGKGKGSAVYWVAQIQPGKVMYEMNGVPEELAREAFRLAARKLPVKTTFVTKQVM.

Belongs to the universal ribosomal protein uL16 family. Part of the 50S ribosomal subunit.

Its function is as follows. Binds 23S rRNA and is also seen to make contacts with the A and possibly P site tRNAs. This is Large ribosomal subunit protein uL16 from Vibrio atlanticus (strain LGP32) (Vibrio splendidus (strain Mel32)).